Consider the following 84-residue polypeptide: Toxin NvePTx1 (84 aa).

The first 21 residues, 1–21 (MFSARLVLVFAVVLCIQLCNA), serve as a signal peptide directing secretion. Positions 22–34 (SWLDERAMTQEKR) are excised as a propeptide.

Belongs to the sea anemone type 5 potassium channel toxin family. Contains 4 disulfide bonds. In terms of tissue distribution, in unfertilized eggs and early post-fertilization stages, is expressed uniformly. In gastrulae, the expression becomes spatially-localized and seems to be absent from the oral and aboral poles. In planulae, the expression is clearly observed in the ectoderm in packed gland cells absent from the two body poles, and upon metamorphosis, the expression diminishes. There is two types of gland cells, one large and elongated and another small and round. This toxin is maternally deposited at both protein and RNA levels.

Its subcellular location is the secreted. It is found in the nematocyst. Neurotoxin that is probably only defensive. Acts as a voltage-gated potassium channel (Kv) inhibitor. In vivo, induces a rapid increase in swimming speed on zebrafish larvae, as well as death which occurs between 2 and 18 hours later. The sequence is that of Toxin NvePTx1 from Nematostella vectensis (Starlet sea anemone).